Consider the following 516-residue polypeptide: Glycosyltransferase-like protein gnt15 (516 aa).

Over 1–24 (MSNFYNNNPRRNTFRLTERIKKKP) the chain is Cytoplasmic. A helical; Signal-anchor for type II membrane protein membrane pass occupies residues 25-45 (YQTLIVFILIFLFLYVFGPFG). The Extracellular portion of the chain corresponds to 46-516 (EKKSNNNNNN…NDNCLTREHW (471 aa)). Residue Asn152 is glycosylated (N-linked (GlcNAc...) asparagine). The segment at 199 to 250 (DTSNNNNNNNNNNNNNNNNNNNNNNNNNNNNNNNENNDNDNGNNNNNNDNEK) is disordered. The segment covering 202–246 (NNNNNNNNNNNNNNNNNNNNNNNNNNNNNNNENNDNDNGNNNNNN) has biased composition (low complexity). Residues Asn386 and Asn412 are each glycosylated (N-linked (GlcNAc...) asparagine).

This sequence belongs to the glycosyltransferase 8 family. Highly divergent.

It is found in the membrane. Functionally, may have a role in modulating cell adhesion and glycosylation. Essential for development. This is Glycosyltransferase-like protein gnt15 (gnt15) from Dictyostelium discoideum (Social amoeba).